The following is a 348-amino-acid chain: Ferredoxin--NADP reductase (348 aa).

8 residues coordinate FAD: Thr-26, Glu-45, Gln-53, Tyr-58, Ala-98, Phe-133, Asp-299, and Ser-340.

It belongs to the ferredoxin--NADP reductase type 2 family. As to quaternary structure, homodimer. FAD is required as a cofactor.

The enzyme catalyses 2 reduced [2Fe-2S]-[ferredoxin] + NADP(+) + H(+) = 2 oxidized [2Fe-2S]-[ferredoxin] + NADPH. The polypeptide is Ferredoxin--NADP reductase (Prosthecochloris aestuarii (strain DSM 271 / SK 413)).